The chain runs to 527 residues: Bifunctional purine biosynthesis protein PurH (527 aa).

One can recognise an MGS-like domain in the interval 1-149 (MASDFLPVRR…KNFARVAVAT (149 aa)).

It belongs to the PurH family.

The enzyme catalyses (6R)-10-formyltetrahydrofolate + 5-amino-1-(5-phospho-beta-D-ribosyl)imidazole-4-carboxamide = 5-formamido-1-(5-phospho-D-ribosyl)imidazole-4-carboxamide + (6S)-5,6,7,8-tetrahydrofolate. The catalysed reaction is IMP + H2O = 5-formamido-1-(5-phospho-D-ribosyl)imidazole-4-carboxamide. It functions in the pathway purine metabolism; IMP biosynthesis via de novo pathway; 5-formamido-1-(5-phospho-D-ribosyl)imidazole-4-carboxamide from 5-amino-1-(5-phospho-D-ribosyl)imidazole-4-carboxamide (10-formyl THF route): step 1/1. Its pathway is purine metabolism; IMP biosynthesis via de novo pathway; IMP from 5-formamido-1-(5-phospho-D-ribosyl)imidazole-4-carboxamide: step 1/1. The sequence is that of Bifunctional purine biosynthesis protein PurH from Xanthomonas oryzae pv. oryzae (strain KACC10331 / KXO85).